The primary structure comprises 445 residues: Argininosuccinate synthase (445 aa).

ATP is bound by residues A17–S25 and A43. Y99 provides a ligand contact to L-citrulline. The ATP site is built by G129 and T131. 3 residues coordinate L-aspartate: T131, N135, and D136. Residue N135 participates in L-citrulline binding. D136 contributes to the ATP binding site. L-citrulline is bound by residues R139 and S192. D194 serves as a coordination point for ATP. L-citrulline-binding residues include T201, E203, and E280.

It belongs to the argininosuccinate synthase family. Type 2 subfamily. In terms of assembly, homotetramer.

The protein localises to the cytoplasm. The enzyme catalyses L-citrulline + L-aspartate + ATP = 2-(N(omega)-L-arginino)succinate + AMP + diphosphate + H(+). The protein operates within amino-acid biosynthesis; L-arginine biosynthesis; L-arginine from L-ornithine and carbamoyl phosphate: step 2/3. This chain is Argininosuccinate synthase, found in Afipia carboxidovorans (strain ATCC 49405 / DSM 1227 / KCTC 32145 / OM5) (Oligotropha carboxidovorans).